Here is a 123-residue protein sequence, read N- to C-terminus: Small ribosomal subunit protein uS12 (123 aa).

Asp89 carries the 3-methylthioaspartic acid modification.

It belongs to the universal ribosomal protein uS12 family. In terms of assembly, part of the 30S ribosomal subunit. Contacts proteins S8 and S17. May interact with IF1 in the 30S initiation complex.

Its function is as follows. With S4 and S5 plays an important role in translational accuracy. Functionally, interacts with and stabilizes bases of the 16S rRNA that are involved in tRNA selection in the A site and with the mRNA backbone. Located at the interface of the 30S and 50S subunits, it traverses the body of the 30S subunit contacting proteins on the other side and probably holding the rRNA structure together. The combined cluster of proteins S8, S12 and S17 appears to hold together the shoulder and platform of the 30S subunit. This is Small ribosomal subunit protein uS12 from Methylorubrum extorquens (strain PA1) (Methylobacterium extorquens).